A 915-amino-acid polypeptide reads, in one-letter code: Phototropin-2 (915 aa).

Over residues 1-10 (MERPRAPPSP) the composition is skewed to pro residues. Disordered stretches follow at residues 1 to 62 (MERP…EFQD) and 84 to 118 (DDGI…GAFP). A phosphoserine mark is found at serine 9 and serine 22. Positions 27–43 (NPSSGKETHGSTSSSSK) are enriched in polar residues. Over residues 93-107 (SEVERSKNMSRRSSE) the composition is skewed to basic and acidic residues. Residues 120-193 (VSQELKTALS…AKIRDCVKNG (74 aa)) enclose the PAS 1 domain. A Phosphoserine modification is found at serine 121. Asparagine 169 serves as a coordination point for FMN. Cysteine 170 carries the post-translational modification S-4a-FMN cysteine. Residues arginine 171, glutamine 174, arginine 187, asparagine 202, asparagine 212, glutamine 233, and lysine 238 each coordinate FMN. In terms of domain architecture, PAC 1 spans 194-248 (KSYCGRLLNYKKDGTPFWNLLTVTPIKDDQGNTIKFIGMQVEVSKYTEGVNDKAL). Residues 281-344 (HRKSQVQESV…KSSNNRHEDL (64 aa)) are disordered. Polar residues-rich tracts occupy residues 286–310 (VQES…GRQT) and 325–337 (RVST…LKSS). Serine 364 bears the Phosphoserine mark. The 74-residue stretch at 376–449 (QGIDLATTLE…QKIRDAIRDQ (74 aa)) folds into the PAS 2 domain. Asparagine 425 lines the FMN pocket. Cysteine 426 is modified (S-4a-FMN cysteine). Positions 427, 430, 443, 458, 468, 470, and 489 each coordinate FMN. A PAC 2 domain is found at 450-504 (REITVQLINYTKSGKKFWNLFHLQPMRDQKGELQYFIGVQLDGSDHVEPLQNRLS). Residues 577–864 (FKPIKPLGSG…ANEIKQHAFF (288 aa)) form the Protein kinase domain. Residues 583–591 (LGSGDTGSV) and lysine 606 each bind ATP. Aspartate 702 acts as the Proton acceptor in catalysis. Residues 720 to 774 (DFDLSFMTTCTPQLIIPAAPSKRRRSKSQPLPTFVAEPSTQSNSFVGTEEYIAPE) form an activation loop region.

This sequence belongs to the protein kinase superfamily. AGC Ser/Thr protein kinase family. Homodimer. Interacts with PKS1, PKS2, RPT3 and PHOT1. Associates with CBC1 and CBC2. Binds to BHP. Requires FMN as cofactor. In terms of processing, autophosphorylated in response to blue light irradiation. Post-translationally, 2 molecules of FMN bind covalently to cysteines after exposure to blue light and are reversed in the dark. Expressed in leaves, stems and flowers, and to a lower extent in roots. Present in guard cells (at protein level).

It is found in the cell membrane. It carries out the reaction L-seryl-[protein] + ATP = O-phospho-L-seryl-[protein] + ADP + H(+). The catalysed reaction is L-threonyl-[protein] + ATP = O-phospho-L-threonyl-[protein] + ADP + H(+). Autophosphorylation is inhibited by staurosporine, but not by tyrphostin 9, sphingosine, GW5074 and BML-265. Functionally, protein kinase that acts as a blue light photoreceptor in a signal-transduction pathway for photo-induced movements. Triggers the phosphorylation of AHA1 and AHA2 C-terminal penultimate Thr in guard cells to activate them and induce stomatal opening in response to blue light (BL). Also phosphorylates BLUS1, a kinase involved in stomatal opening. Mediates calcium spiking of extra- and intracellular origins in response to blue light. Involved in hypocotyl phototropism. Contributes to the chloroplast accumulation in low blue light and mediates their translocation (avoidance response) at high fluence. Regulates stomata opening and photomorphogenesis response of leaf tissue. Not involved in hypocotyl elongation inhibition, anthocyanin accumulation or cotyledon opening. This chain is Phototropin-2, found in Arabidopsis thaliana (Mouse-ear cress).